A 398-amino-acid polypeptide reads, in one-letter code: Exodeoxyribonuclease 7 large subunit (398 aa).

The protein belongs to the XseA family. As to quaternary structure, heterooligomer composed of large and small subunits.

The protein localises to the cytoplasm. It catalyses the reaction Exonucleolytic cleavage in either 5'- to 3'- or 3'- to 5'-direction to yield nucleoside 5'-phosphates.. Its function is as follows. Bidirectionally degrades single-stranded DNA into large acid-insoluble oligonucleotides, which are then degraded further into small acid-soluble oligonucleotides. The sequence is that of Exodeoxyribonuclease 7 large subunit from Chlorobaculum tepidum (strain ATCC 49652 / DSM 12025 / NBRC 103806 / TLS) (Chlorobium tepidum).